Consider the following 854-residue polypeptide: Arsenate respiratory reductase molybdopterin-containing subunit ArrA (854 aa).

The tat-type signal signal peptide spans 1 to 41; the sequence is MKKENQVNLGRRQLLKSTAAGTVLTGIGGTLSFTPIVEGIA. The 57-residue stretch at 54 to 110 folds into the 4Fe-4S Mo/W bis-MGD-type domain; that stretch reads GEWLATTCQGCTSWCAKQIYVMDGRALKVRGNPNSGVHGMSSCPRQHLSLQQVYDPD. 4 residues coordinate [4Fe-4S] cluster: C61, C64, C68, and C96. R165 is an arsenite binding site. An arsenate-binding site is contributed by Y166. Residue H189 participates in arsenite binding. S190 lines the arsenate pocket. C193 contributes to the Mo-bis(molybdopterin guanine dinucleotide) binding site. K198 contributes to the arsenate binding site. An arsenite-binding site is contributed by Y210.

This sequence belongs to the prokaryotic molybdopterin-containing oxidoreductase family. As to quaternary structure, heterodimer composed of one large subunit (ArrA) and one small subunit (ArrB). The cofactor is [4Fe-4S] cluster. It depends on Mo-bis(molybdopterin guanine dinucleotide) as a cofactor. Post-translationally, predicted to be exported by the Tat system. The position of the signal peptide cleavage has not been experimentally proven.

Its subcellular location is the periplasm. It carries out the reaction arsenite + A + H2O = arsenate + AH2 + H(+). Phosphate is a competitive inhibitor. Its function is as follows. Component of the arsenate respiratory reductase (Arr) complex, which catalyzes the reduction of arsenate (As(V)) to arsenite (As(III)). ArrA is the arsenate-binding subunit. The periplasmic localization of this complex may allow the cell to couple arsenate reduction to energy production before arsenate can be transported to the cell cytoplasm and enter the ars detoxification pathway, an energy-requiring process. The sequence is that of Arsenate respiratory reductase molybdopterin-containing subunit ArrA from Shewanella sp. (strain ANA-3).